The primary structure comprises 571 residues: Potassium-transporting ATPase potassium-binding subunit (571 aa).

12 helical membrane-spanning segments follow: residues 5-25 (LAAGLQVAFVLAVLAVAYVPV), 60-80 (YGYAGSVLGFSTASVLFLYAL), 86-106 (VLPLSGDLSGVSPAVAFNTAV), 131-151 (GLAVQNFVSAAVGMAVAVALI), 177-197 (ILLPFSFVIALILLSQGVIQS), 247-267 (PTPVSNIVEILAILLIPVSLT), 291-311 (LTLLAVMGILWGSLLAVTLAA), 334-354 (FGIPGTALFAVSTTGTSTGAV), 386-406 (GLYGILVLALIAVFVGGLLVG), 425-445 (ALSVLVMPALVLIGTGITVIL), 498-518 (ALGLCMLFGRFLPIIFVLALA), and 547-567 (GTVVLVAALTFFPALALGPIA).

The protein belongs to the KdpA family. The system is composed of three essential subunits: KdpA, KdpB and KdpC.

The protein resides in the cell membrane. In terms of biological role, part of the high-affinity ATP-driven potassium transport (or Kdp) system, which catalyzes the hydrolysis of ATP coupled with the electrogenic transport of potassium into the cytoplasm. This subunit binds the extracellular potassium ions and delivers the ions to the membrane domain of KdpB through an intramembrane tunnel. This chain is Potassium-transporting ATPase potassium-binding subunit, found in Rhodococcus jostii (strain RHA1).